Here is a 594-residue protein sequence, read N- to C-terminus: Cationic amino acid transporter 1 (594 aa).

Ala-2 is modified (N-acetylalanine). The Cytoplasmic segment spans residues 2-78 (ASGGGDDGLR…EMKKTLTWWD (77 aa)). A helical transmembrane segment spans residues 79–99 (LMWFGIGAVIGSGIFVLTGLE). Topologically, residues 100–104 (ARNHS) are extracellular. Residue Asn-102 is glycosylated (N-linked (GlcNAc...) asparagine). A helical membrane pass occupies residues 105–125 (GPAVVLSYVVSGVSAMLSVFC). Over 126 to 149 (YTEFAVEIPVAGGSFAYLRVELGD) the chain is Cytoplasmic. Residues 150–170 (FMAFIAAGNIILEYVVGGAAV) traverse the membrane as a helical segment. The Extracellular portion of the chain corresponds to 171-201 (ARSWTSYFATLLNHKPEDFRIIVHKLGEDYS). Residues 202 to 222 (HLDPIAVGVCAIICVLAVVGT) form a helical membrane-spanning segment. The Cytoplasmic portion of the chain corresponds to 223–227 (KGSSR). A helical transmembrane segment spans residues 228–248 (FNYIASIIHMVVILFVIIAGF). Residues 249–266 (TKADVKNYSDFTPYGVRG) lie on the Extracellular side of the membrane. Residue Asn-255 is glycosylated (N-linked (GlcNAc...) asparagine). A helical membrane pass occupies residues 267-287 (VFKSAAVLFFAYIGFDAVSTM). The Cytoplasmic segment spans residues 288 to 297 (AEETKNPGRD). The helical transmembrane segment at 298-318 (IPIGLVGSMVVTTVCYCLMAV) threads the bilayer. Residues 319 to 348 (TLCLMQPYQQIDPDAPFSVAFSAVGWDWAK) are Extracellular-facing. A helical membrane pass occupies residues 349–369 (YIVAFGALKGMTTVLLVGAIG). Residues 370–393 (QARYMTHIARAHMMPPWLAQVNAK) are Cytoplasmic-facing. A helical transmembrane segment spans residues 394-414 (TGTPINATVVMLAATALIAFF). The Extracellular segment spans residues 415-418 (TKLK). Residues 419–439 (ILADLLSVSTLFIFMFVAVAL) form a helical membrane-spanning segment. The Cytoplasmic segment spans residues 440–457 (LVRRYYVTGETSTRDRNK). A helical transmembrane segment spans residues 458–478 (FLVFLGLILASSTATAVYWAL). At 479–483 (EEEGW) the chain is on the extracellular side. The helical transmembrane segment at 484 to 504 (IGYCITVPIWFLSTVAMKFLV) threads the bilayer. Topologically, residues 505–511 (PQARAPK) are cytoplasmic. A helical transmembrane segment spans residues 512 to 532 (IWGVPLVPWLPSASIAINIFL). The Extracellular segment spans residues 533–543 (LGSIDTKSFVR). Residues 544–564 (FAIWTGILLIYYVLFGLHATY) form a helical membrane-spanning segment. At 565–594 (DTAKATLKEKQALQKAEEGGVVADNSCSAT) the chain is on the cytoplasmic side.

Belongs to the amino acid-polyamine-organocation (APC) superfamily. Cationic amino acid transporter (CAT) (TC 2.A.3.3) family. As to expression, expressed in roots, stems, flowers, petioles, seeds, siliques, and leaves. Mostly present in major veins.

It is found in the membrane. Inhibited by the protonophore 2,4-dinitrophenol. Functionally, high-affinity permease involved in the transport of the cationic amino acids (e.g. arginine, lysine, histidine, citrulline, valine, and glutamate). Transport mostly basic amino acids, and, to a lower extent neutral and acidic amino acids. May function as a proton symporter. The polypeptide is Cationic amino acid transporter 1 (CAT1) (Arabidopsis thaliana (Mouse-ear cress)).